The primary structure comprises 357 residues: Protein AAR2 homolog (357 aa).

Belongs to the AAR2 family.

This chain is Protein AAR2 homolog, found in Caenorhabditis elegans.